We begin with the raw amino-acid sequence, 300 residues long: UPF0282 protein TON_1363 (300 aa).

Belongs to the UPF0282 family.

The protein is UPF0282 protein TON_1363 of Thermococcus onnurineus (strain NA1).